A 134-amino-acid polypeptide reads, in one-letter code: Phosphomevalonate dehydratase small subunit (134 aa).

Serine 62 acts as the Proton acceptor in catalysis.

Belongs to the AcnX type II small subunit family. In terms of assembly, heterodimer composed of a large subunit (PMDh-L) and a small subunit (PMDh-S).

The enzyme catalyses (R)-5-phosphomevalonate = (2E)-3-methyl-5-phosphooxypent-2-enoate + H2O. It functions in the pathway isoprenoid biosynthesis; isopentenyl diphosphate biosynthesis via mevalonate pathway. In terms of biological role, component of a hydro-lyase that catalyzes the dehydration of mevalonate 5-phosphate (MVA5P) to form trans-anhydromevalonate 5-phosphate (tAHMP). Involved in the archaeal mevalonate (MVA) pathway, which provides fundamental precursors for isoprenoid biosynthesis, such as isopentenyl diphosphate (IPP) and dimethylallyl diphosphate (DMAPP). The chain is Phosphomevalonate dehydratase small subunit from Pyrococcus horikoshii (strain ATCC 700860 / DSM 12428 / JCM 9974 / NBRC 100139 / OT-3).